We begin with the raw amino-acid sequence, 103 residues long: ATP synthase F(0) complex subunit g, mitochondrial (103 aa).

At Ala2 the chain carries N-acetylalanine. 4 positions are modified to N6-acetyllysine: Lys11, Lys24, Lys35, and Lys54.

The protein belongs to the ATPase g subunit family. As to quaternary structure, component of the ATP synthase complex composed at least of ATP5F1A/subunit alpha, ATP5F1B/subunit beta, ATP5MC1/subunit c (homooctomer), MT-ATP6/subunit a, MT-ATP8/subunit 8, ATP5ME/subunit e, ATP5MF/subunit f, ATP5MG/subunit g, ATP5MK/subunit k, ATP5MJ/subunit j, ATP5F1C/subunit gamma, ATP5F1D/subunit delta, ATP5F1E/subunit epsilon, ATP5PF/subunit F6, ATP5PB/subunit b, ATP5PD/subunit d, ATP5PO/subunit OSCP. ATP synthase complex consists of a soluble F(1) head domain (subunits alpha(3) and beta(3)) - the catalytic core - and a membrane F(0) domain - the membrane proton channel (subunits c, a, 8, e, f, g, k and j). These two domains are linked by a central stalk (subunits gamma, delta, and epsilon) rotating inside the F1 region and a stationary peripheral stalk (subunits F6, b, d, and OSCP).

The protein resides in the mitochondrion. The protein localises to the mitochondrion inner membrane. Its function is as follows. Subunit g, of the mitochondrial membrane ATP synthase complex (F(1)F(0) ATP synthase or Complex V) that produces ATP from ADP in the presence of a proton gradient across the membrane which is generated by electron transport complexes of the respiratory chain. ATP synthase complex consist of a soluble F(1) head domain - the catalytic core - and a membrane F(1) domain - the membrane proton channel. These two domains are linked by a central stalk rotating inside the F(1) region and a stationary peripheral stalk. During catalysis, ATP synthesis in the catalytic domain of F(1) is coupled via a rotary mechanism of the central stalk subunits to proton translocation. In vivo, can only synthesize ATP although its ATP hydrolase activity can be activated artificially in vitro. Part of the complex F(0) domain. This is ATP synthase F(0) complex subunit g, mitochondrial from Homo sapiens (Human).